The following is a 181-amino-acid chain: ATP synthase subunit delta (181 aa).

It belongs to the ATPase delta chain family. In terms of assembly, F-type ATPases have 2 components, F(1) - the catalytic core - and F(0) - the membrane proton channel. F(1) has five subunits: alpha(3), beta(3), gamma(1), delta(1), epsilon(1). F(0) has three main subunits: a(1), b(2) and c(10-14). The alpha and beta chains form an alternating ring which encloses part of the gamma chain. F(1) is attached to F(0) by a central stalk formed by the gamma and epsilon chains, while a peripheral stalk is formed by the delta and b chains.

Its subcellular location is the cell membrane. Functionally, f(1)F(0) ATP synthase produces ATP from ADP in the presence of a proton or sodium gradient. F-type ATPases consist of two structural domains, F(1) containing the extramembraneous catalytic core and F(0) containing the membrane proton channel, linked together by a central stalk and a peripheral stalk. During catalysis, ATP synthesis in the catalytic domain of F(1) is coupled via a rotary mechanism of the central stalk subunits to proton translocation. In terms of biological role, this protein is part of the stalk that links CF(0) to CF(1). It either transmits conformational changes from CF(0) to CF(1) or is implicated in proton conduction. The protein is ATP synthase subunit delta of Desulforamulus reducens (strain ATCC BAA-1160 / DSM 100696 / MI-1) (Desulfotomaculum reducens).